Reading from the N-terminus, the 314-residue chain is tRNA pseudouridine synthase B (314 aa).

Histidine 43 provides a ligand contact to substrate. The active-site Nucleophile is the aspartate 48. Substrate is bound by residues tyrosine 76, tyrosine 179, and leucine 200.

It belongs to the pseudouridine synthase TruB family. Type 1 subfamily.

It catalyses the reaction uridine(55) in tRNA = pseudouridine(55) in tRNA. Its function is as follows. Responsible for synthesis of pseudouridine from uracil-55 in the psi GC loop of transfer RNAs. This is tRNA pseudouridine synthase B from Salmonella paratyphi B (strain ATCC BAA-1250 / SPB7).